The chain runs to 503 residues: 2,3-bisphosphoglycerate-independent phosphoglycerate mutase (503 aa).

Mn(2+) contacts are provided by aspartate 10 and serine 60. Serine 60 functions as the Phosphoserine intermediate in the catalytic mechanism. Substrate contacts are provided by residues histidine 121, 150–151 (RD), arginine 181, arginine 187, 256–259 (RPDR), and lysine 330. Mn(2+)-binding residues include aspartate 396, histidine 400, aspartate 437, histidine 438, and histidine 455.

The protein belongs to the BPG-independent phosphoglycerate mutase family. As to quaternary structure, monomer. Mn(2+) is required as a cofactor.

The catalysed reaction is (2R)-2-phosphoglycerate = (2R)-3-phosphoglycerate. It functions in the pathway carbohydrate degradation; glycolysis; pyruvate from D-glyceraldehyde 3-phosphate: step 3/5. Its function is as follows. Catalyzes the interconversion of 2-phosphoglycerate and 3-phosphoglycerate. The sequence is that of 2,3-bisphosphoglycerate-independent phosphoglycerate mutase from Mycoplasmoides gallisepticum (strain R(low / passage 15 / clone 2)) (Mycoplasma gallisepticum).